The chain runs to 269 residues: Type II iodothyronine deiodinase (269 aa).

Topologically, residues 1-9 are lumenal; the sequence is MGILSVDLL. A helical; Signal-anchor for type III membrane protein transmembrane segment spans residues 10-34; that stretch reads ITLQILPVFFSNCLFLALYDSVILL. The Cytoplasmic portion of the chain corresponds to 35 to 269; it reads KHVVLLLSRS…KNFSKRUKLD (235 aa). Residues 83–103 form a disordered region; the sequence is NSSVVHVSSPEGGDTSGNGAQ. The active site involves Sec-133. 2 non-standard amino acids (selenocysteine) are found at residues Sec-133 and Sec-266.

The protein belongs to the iodothyronine deiodinase family. As to quaternary structure, predominantly monomer. Can form homodimers but homodimerization is not essential for enzyme activity. Interacts with USP20 and USP33. Interacts with MARCHF6. Ubiquitinated by MARCHF6, leading to its degradation by the proteasome. Deubiquitinated by USP20 and USP33. In terms of tissue distribution, highly expressed in thyroid, mammary and pituitary glands, then in hypothalamus. Low levels detected in diaphragm, heart, kidney and lung.

The protein localises to the endoplasmic reticulum membrane. The catalysed reaction is 3,3',5-triiodo-L-thyronine + iodide + A + H(+) = L-thyroxine + AH2. It carries out the reaction 3,3'-diiodo-L-thyronine + iodide + A + H(+) = 3,3',5'-triiodo-L-thyronine + AH2. It catalyses the reaction 3'-iodo-L-thyronine + iodide + A + H(+) = 3',5'-diiodo-L-thyronine + AH2. The enzyme catalyses 3,3'-diiodothyronamine + iodide + A + H(+) = 3,3',5'-triiodothyronamine + AH2. The catalysed reaction is 3'-iodothyronamine + iodide + A + H(+) = 3',5'-diiodothyronamine + AH2. Plays a crucial role in the metabolism of thyroid hormones (TH) and has specific roles in TH activation and inactivation by deiodination. Catalyzes the deiodination of L-thyroxine (T4) to 3,5,3'-triiodothyronine (T3), 3,3',5'-triiodothyronine (rT3) to 3,3'-diiodothyronine (3,3'-T2) and 3',5'-diiodothyronine (3',5'-T2) to 3'-monoiodothyronine (3'-T1) via outer-ring deiodination (ORD). Catalyzes the phenolic ring deiodinations of 3,3',5'-triiodothyronamine and 3',5'- diiodothyronamine. The sequence is that of Type II iodothyronine deiodinase (DIO2) from Bos taurus (Bovine).